Consider the following 598-residue polypeptide: UvrABC system protein C (598 aa).

A GIY-YIG domain is found at 14–91 (DSPGCYLHKD…IQKNMPKYNI (78 aa)). Positions 196–231 (DKIIEDLRSKMLAASEEMAFERAAEYRDLISGIATM) constitute a UVR domain.

It belongs to the UvrC family. As to quaternary structure, interacts with UvrB in an incision complex.

The protein localises to the cytoplasm. Functionally, the UvrABC repair system catalyzes the recognition and processing of DNA lesions. UvrC both incises the 5' and 3' sides of the lesion. The N-terminal half is responsible for the 3' incision and the C-terminal half is responsible for the 5' incision. This chain is UvrABC system protein C, found in Streptococcus pyogenes serotype M3 (strain ATCC BAA-595 / MGAS315).